Reading from the N-terminus, the 362-residue chain is Dihydroorotate dehydrogenase (quinone) (362 aa).

Residues 62–66 (AGYDK) and T86 each bind FMN. K66 is a substrate binding site. Position 111–115 (111–115 (NRLGF)) interacts with substrate. Residues N139 and N170 each contribute to the FMN site. Residue N170 participates in substrate binding. The Nucleophile role is filled by S173. Substrate is bound at residue N175. FMN is bound by residues K215 and S243. 244 to 245 (NT) lines the substrate pocket. FMN contacts are provided by residues G266, G295, and 316–317 (YS).

This sequence belongs to the dihydroorotate dehydrogenase family. Type 2 subfamily. Monomer. The cofactor is FMN.

It localises to the cell membrane. It catalyses the reaction (S)-dihydroorotate + a quinone = orotate + a quinol. It functions in the pathway pyrimidine metabolism; UMP biosynthesis via de novo pathway; orotate from (S)-dihydroorotate (quinone route): step 1/1. Its function is as follows. Catalyzes the conversion of dihydroorotate to orotate with quinone as electron acceptor. In Rhizobium meliloti (strain 1021) (Ensifer meliloti), this protein is Dihydroorotate dehydrogenase (quinone).